The sequence spans 335 residues: Geranylgeranyl pyrophosphate synthase BTS1 (335 aa).

The isopentenyl diphosphate site is built by Lys-36, Arg-39, and His-68. Mg(2+) is bound by residues Asp-75 and Asp-79. Position 84 (Arg-84) interacts with dimethylallyl diphosphate. Arg-85 serves as a coordination point for isopentenyl diphosphate. Lys-169, Thr-170, Gln-206, Asn-213, Lys-223, and Lys-233 together coordinate dimethylallyl diphosphate.

It belongs to the FPP/GGPP synthase family. Requires Mg(2+) as cofactor.

The protein localises to the cytoplasm. It catalyses the reaction isopentenyl diphosphate + dimethylallyl diphosphate = (2E)-geranyl diphosphate + diphosphate. It carries out the reaction isopentenyl diphosphate + (2E)-geranyl diphosphate = (2E,6E)-farnesyl diphosphate + diphosphate. The enzyme catalyses isopentenyl diphosphate + (2E,6E)-farnesyl diphosphate = (2E,6E,10E)-geranylgeranyl diphosphate + diphosphate. Its pathway is isoprenoid biosynthesis; farnesyl diphosphate biosynthesis; farnesyl diphosphate from geranyl diphosphate and isopentenyl diphosphate: step 1/1. It functions in the pathway isoprenoid biosynthesis; geranyl diphosphate biosynthesis; geranyl diphosphate from dimethylallyl diphosphate and isopentenyl diphosphate: step 1/1. It participates in isoprenoid biosynthesis; geranylgeranyl diphosphate biosynthesis; geranylgeranyl diphosphate from farnesyl diphosphate and isopentenyl diphosphate: step 1/1. Catalyzes the trans-addition of the 3 molecules of IPP onto DMAPP to form geranylgeranyl pyrophosphate. Required for the membrane attachment of YPT1 and SEC4. May be involved in vesicle trafficking and protein sorting. In Saccharomyces cerevisiae (strain ATCC 204508 / S288c) (Baker's yeast), this protein is Geranylgeranyl pyrophosphate synthase BTS1 (BTS1).